The primary structure comprises 82 residues: MAFTLYSLMQAALLCVNAIAVLHEERFLKNIGWGTDQGIGGFGEEPGIKSQLLNLIRSVRTVMRVPLIIVNSITIVLLLLFG.

2 helical membrane passes run 2–22 (AFTL…IAVL) and 62–82 (VMRV…LLFG).

This sequence belongs to the YOS1 family.

It is found in the endoplasmic reticulum membrane. In terms of biological role, regulator of endoplasmic reticulum secretion that acts as a key determinant of brain size. Required for secretion of extracellular matrix proteins. Required for correct brain development by depositing sufficient extracellular matrix proteins for tissue integrity and the proliferation of neural progenitors. Acts as a regulator of the unfolded protein response (UPR). This Rattus norvegicus (Rat) protein is Immediate early response 3-interacting protein 1.